Reading from the N-terminus, the 264-residue chain is Endoglucanase S (264 aa).

An N-terminal signal peptide occupies residues 1-32 (MQTVNTQPHRIFRVLLPAVFSSLLLSSLTVSA).

It belongs to the glycosyl hydrolase 12 (cellulase H) family.

It catalyses the reaction Endohydrolysis of (1-&gt;4)-beta-D-glucosidic linkages in cellulose, lichenin and cereal beta-D-glucans.. This chain is Endoglucanase S (celS), found in Pectobacterium parmentieri.